A 472-amino-acid chain; its full sequence is Glutamate--tRNA ligase (472 aa).

Positions 9-19 (PSPTGYLHVGG) match the 'HIGH' region motif. Zn(2+) is bound by residues Cys98, Cys100, Cys125, and His127. The 'KMSKS' region signature appears at 237–241 (KLSKR). Residue Lys240 participates in ATP binding.

The protein belongs to the class-I aminoacyl-tRNA synthetase family. Glutamate--tRNA ligase type 1 subfamily. As to quaternary structure, monomer. Zn(2+) is required as a cofactor.

The protein localises to the cytoplasm. The catalysed reaction is tRNA(Glu) + L-glutamate + ATP = L-glutamyl-tRNA(Glu) + AMP + diphosphate. Its function is as follows. Catalyzes the attachment of glutamate to tRNA(Glu) in a two-step reaction: glutamate is first activated by ATP to form Glu-AMP and then transferred to the acceptor end of tRNA(Glu). This chain is Glutamate--tRNA ligase, found in Klebsiella pneumoniae (strain 342).